The sequence spans 941 residues: MQHKTIMDKIIIQGARENNLKNIFLEIPKNQFVVFTGLSGSGKSTLAFDTLYAEGQRRYLESLSSYARQFLDKVGKPNVDKIEGLTPAIAIDQKTTSKNPRSTVGTITEIYDYLRLLFARVGEQFCPTCLEPISSMSASDIISQICHLEENSKIIILAPIIKDKKGSFNDKLESLRLKGYVRAFVDGVMVRLDEEIHLHKTKKHTIEAVVDRVVINSENASRIASAVEKALKESYGELEVEILQDNAPSIRKHYSEHKACFKCKMSFEELEPLSFSFNSPKGACESCLGLGTKFSLDISKILDPNTPLNQGAIKVIFGYNRSYYAQMFEGFCTYNGIDSALCFNELNKEQQDALLYGNGTEISFHFKNSPLKRPWKGIIQIAYDMFKEQKDLSDYMSEKTCSSCNGHRLKASSLSVQVAGLKMADFLTKPIEEVYHFFNDPTHFNYLNEQEKKIAEPILKEILERVFFLYDVGLGYLTLGRDARTISGGESQRIRIASQIGSGLTGVLYVLDEPSIGLHEKDTLKLINTLRNLQKKGNTLIVVEHDKETIKHADFVVDIGPKAGRHGGEVVFSGSVKDLLQNNHSTALYLNGTKKIERPKFEPPKEKHFLEIKNVNINNIKNLSVQIPLKQLVCITGVSGSGKSSLILQTLLPTAQTLLNHAKKNQSLNGVEIVGLEYLDKVIYLDQAPIGKTPRSNPATYTGVMDEIRILFAEQKEAKILGYSTSRFSFNVKGGRCEKCQGDGDIKIEMHFLPDVLVQCDSCKGAKYNPQTLEIKVKGKSIADVLNMSVEEAYEFFAKFPKIAVKLKTLIDVGLGYITLGQNATTLSGGEAQRIKLAKELSKKDTGKTLYILDEPTTGLHFEDVNHLLQVLHSLVALGNSMLVIEHNLDIIKNADYIIDMGPDGGDKGGKVIASGTPLEVAQNCEKTQSYTGKFLALELK.

ATP is bound at residue 37–44 (GLSGSGKS). The segment at 260 to 287 (CFKCKMSFEELEPLSFSFNSPKGACESC) adopts a C4-type zinc-finger fold. ABC transporter domains are found at residues 316–585 (IFGY…NNHS) and 605–937 (KEKH…KFLA). Position 637–644 (637–644 (GVSGSGKS)) interacts with ATP. The C4-type zinc-finger motif lies at 737 to 763 (CEKCQGDGDIKIEMHFLPDVLVQCDSC).

The protein belongs to the ABC transporter superfamily. UvrA family. As to quaternary structure, forms a heterotetramer with UvrB during the search for lesions.

It is found in the cytoplasm. In terms of biological role, the UvrABC repair system catalyzes the recognition and processing of DNA lesions. UvrA is an ATPase and a DNA-binding protein. A damage recognition complex composed of 2 UvrA and 2 UvrB subunits scans DNA for abnormalities. When the presence of a lesion has been verified by UvrB, the UvrA molecules dissociate. The polypeptide is UvrABC system protein A (Helicobacter pylori (strain J99 / ATCC 700824) (Campylobacter pylori J99)).